The primary structure comprises 102 residues: Putative pterin-4-alpha-carbinolamine dehydratase (102 aa).

This sequence belongs to the pterin-4-alpha-carbinolamine dehydratase family.

It carries out the reaction (4aS,6R)-4a-hydroxy-L-erythro-5,6,7,8-tetrahydrobiopterin = (6R)-L-erythro-6,7-dihydrobiopterin + H2O. In Burkholderia cenocepacia (strain ATCC BAA-245 / DSM 16553 / LMG 16656 / NCTC 13227 / J2315 / CF5610) (Burkholderia cepacia (strain J2315)), this protein is Putative pterin-4-alpha-carbinolamine dehydratase.